Reading from the N-terminus, the 289-residue chain is Purine nucleoside phosphorylase (289 aa).

At M1 the chain carries N-acetylmethionine. Phosphate contacts are provided by residues S33, H64, and 84-86; that span reads RFH. An a purine D-ribonucleoside-binding site is contributed by Y88. A116 lines the phosphate pocket. The a purine D-ribonucleoside site is built by E201 and M219. Phosphate is bound at residue S220. N243 serves as a coordination point for a purine D-ribonucleoside. Phosphoserine is present on S251. H257 contributes to the a purine D-ribonucleoside binding site.

It belongs to the PNP/MTAP phosphorylase family. In terms of assembly, homotrimer. Expressed in red blood cells; overexpressed in red blood cells (cytoplasm) of patients with hereditary non-spherocytic hemolytic anemia of unknown etiology.

Its subcellular location is the cytoplasm. It catalyses the reaction inosine + phosphate = alpha-D-ribose 1-phosphate + hypoxanthine. The catalysed reaction is guanosine + phosphate = alpha-D-ribose 1-phosphate + guanine. The enzyme catalyses 2'-deoxyguanosine + phosphate = 2-deoxy-alpha-D-ribose 1-phosphate + guanine. It carries out the reaction 2'-deoxyinosine + phosphate = 2-deoxy-alpha-D-ribose 1-phosphate + hypoxanthine. Its pathway is purine metabolism; purine nucleoside salvage. With respect to regulation, inhibited by 5'-deaza-1'-aza-2c-deoxy-1'-(9-methylene)-Immucilin-G (DADMe-ImmG). Its function is as follows. Catalyzes the phosphorolytic breakdown of the N-glycosidic bond in the beta-(deoxy)ribonucleoside molecules, with the formation of the corresponding free purine bases and pentose-1-phosphate. Preferentially acts on 6-oxopurine nucleosides including inosine and guanosine. The chain is Purine nucleoside phosphorylase (PNP) from Homo sapiens (Human).